We begin with the raw amino-acid sequence, 352 residues long: MSEQQTMSELKQQALVDINEANDERALQEVKVKYLGKKGSVSGLMKLMKDLPNEDKPAFGQKVNELRQTIQNELDERQQMLVKEKLNKQLAEETIDVSLPGRHIEIGSKHPLTRTIEEIEDLFLGLGYEIVNGYEVEQDHYNFEMLNLPKSHPARDMQDSFYITDEILLRTHTSPVQARTMESRHGQGPVKIICPGKVYRRDSDDATHSHQFTQIEGLVVDKNVKMSDLKGTLELLAKKLFGADREIRLRPSYFPFTEPSVEVDVSCFKCKGKGCNVCKHTGWIEILGAGMVHPNVLEMAGFDSSEYSGFAFGMGPDRIAMLKYGIEDIRHFYTNDVRFLDQFKAVEDRGDM.

Glu-258 is a binding site for Mg(2+).

This sequence belongs to the class-II aminoacyl-tRNA synthetase family. Phe-tRNA synthetase alpha subunit type 1 subfamily. As to quaternary structure, tetramer of two alpha and two beta subunits. Mg(2+) is required as a cofactor.

It is found in the cytoplasm. The catalysed reaction is tRNA(Phe) + L-phenylalanine + ATP = L-phenylalanyl-tRNA(Phe) + AMP + diphosphate + H(+). This chain is Phenylalanine--tRNA ligase alpha subunit, found in Staphylococcus aureus (strain NCTC 8325 / PS 47).